A 180-amino-acid chain; its full sequence is SPbeta prophage-derived uncharacterized protein YosC (180 aa).

The sequence is that of SPbeta prophage-derived uncharacterized protein YosC (yosC) from Bacillus subtilis (strain 168).